Reading from the N-terminus, the 117-residue chain is Aspartate 1-decarboxylase (117 aa).

S25 (schiff-base intermediate with substrate; via pyruvic acid) is an active-site residue. Pyruvic acid (Ser) is present on S25. T57 contacts substrate. Y58 acts as the Proton donor in catalysis. 73-75 is a binding site for substrate; sequence GAA.

This sequence belongs to the PanD family. Heterooctamer of four alpha and four beta subunits. Pyruvate serves as cofactor. Post-translationally, is synthesized initially as an inactive proenzyme, which is activated by self-cleavage at a specific serine bond to produce a beta-subunit with a hydroxyl group at its C-terminus and an alpha-subunit with a pyruvoyl group at its N-terminus.

It localises to the cytoplasm. The enzyme catalyses L-aspartate + H(+) = beta-alanine + CO2. It participates in cofactor biosynthesis; (R)-pantothenate biosynthesis; beta-alanine from L-aspartate: step 1/1. Its function is as follows. Catalyzes the pyruvoyl-dependent decarboxylation of aspartate to produce beta-alanine. This is Aspartate 1-decarboxylase from Thermoanaerobacter pseudethanolicus (strain ATCC 33223 / 39E) (Clostridium thermohydrosulfuricum).